Reading from the N-terminus, the 117-residue chain is Large ribosomal subunit protein uL22 (117 aa).

This sequence belongs to the universal ribosomal protein uL22 family. In terms of assembly, part of the 50S ribosomal subunit.

Functionally, this protein binds specifically to 23S rRNA; its binding is stimulated by other ribosomal proteins, e.g. L4, L17, and L20. It is important during the early stages of 50S assembly. It makes multiple contacts with different domains of the 23S rRNA in the assembled 50S subunit and ribosome. The globular domain of the protein is located near the polypeptide exit tunnel on the outside of the subunit, while an extended beta-hairpin is found that lines the wall of the exit tunnel in the center of the 70S ribosome. The polypeptide is Large ribosomal subunit protein uL22 (Staphylococcus epidermidis (strain ATCC 35984 / DSM 28319 / BCRC 17069 / CCUG 31568 / BM 3577 / RP62A)).